The primary structure comprises 276 residues: MKNTTETFKNSKFKKEKLVMLTAYDYSTAKIIDSCDINGILVGDSLGMVCLGYENTLSVTMEDMIHHTKAVVRGAKSTLIVADLPFMSYQTSVYDAVFNAGRLVKEAGATAIKLEGGALVCDRIKAIVDAQIPVMGHIGLTPQSVNAFGGFKIQGKNISKAKELIEDAKKIEAAGAFAITLEGIPEKLAKIITESITIPTIGIGAGKHCDGQILVYQDMLGMFSDLAPKFVKRYGNIGDDMKEAFNSYAKEVREGTFPDEAHSFKIDQSIIDEITK.

Mg(2+) is bound by residues aspartate 44 and aspartate 83. 3-methyl-2-oxobutanoate is bound by residues 44-45 (DS), aspartate 83, and lysine 113. Glutamate 115 is a Mg(2+) binding site. The Proton acceptor role is filled by glutamate 182.

This sequence belongs to the PanB family. As to quaternary structure, homodecamer; pentamer of dimers. Mg(2+) serves as cofactor.

The protein localises to the cytoplasm. The catalysed reaction is 3-methyl-2-oxobutanoate + (6R)-5,10-methylene-5,6,7,8-tetrahydrofolate + H2O = 2-dehydropantoate + (6S)-5,6,7,8-tetrahydrofolate. It functions in the pathway cofactor biosynthesis; (R)-pantothenate biosynthesis; (R)-pantoate from 3-methyl-2-oxobutanoate: step 1/2. Its function is as follows. Catalyzes the reversible reaction in which hydroxymethyl group from 5,10-methylenetetrahydrofolate is transferred onto alpha-ketoisovalerate to form ketopantoate. The polypeptide is 3-methyl-2-oxobutanoate hydroxymethyltransferase (Clostridium acetobutylicum (strain ATCC 824 / DSM 792 / JCM 1419 / IAM 19013 / LMG 5710 / NBRC 13948 / NRRL B-527 / VKM B-1787 / 2291 / W)).